The following is a 610-amino-acid chain: UvrABC system protein C (610 aa).

The region spanning 16–94 (SAPGVYRMYD…IKQYMPKYNV (79 aa)) is the GIY-YIG domain. The region spanning 203–238 (KQVISQLVAKMETAAIDMEYERAAQYRDQITALRRV) is the UVR domain.

The protein belongs to the UvrC family. Interacts with UvrB in an incision complex.

The protein resides in the cytoplasm. The UvrABC repair system catalyzes the recognition and processing of DNA lesions. UvrC both incises the 5' and 3' sides of the lesion. The N-terminal half is responsible for the 3' incision and the C-terminal half is responsible for the 5' incision. In Shewanella frigidimarina (strain NCIMB 400), this protein is UvrABC system protein C.